A 98-amino-acid chain; its full sequence is HssA/B-like protein 39 (98 aa).

The interval 1–21 (MTLFSSISSMSTSMSGSKSSI) is disordered.

Belongs to the hssA/B family.

The protein is HssA/B-like protein 39 (hssl39) of Dictyostelium discoideum (Social amoeba).